The sequence spans 124 residues: Fluoride-specific ion channel FluC (124 aa).

Helical transmembrane passes span 5–25 (VYIA…SGFV), 32–52 (SFPY…GLIM), 67–87 (FAIT…SFET), and 96–116 (LLIA…CTWI). 2 residues coordinate Na(+): G75 and T78.

The protein belongs to the fluoride channel Fluc/FEX (TC 1.A.43) family.

The protein resides in the cell inner membrane. The catalysed reaction is fluoride(in) = fluoride(out). Na(+) is not transported, but it plays an essential structural role and its presence is essential for fluoride channel function. In terms of biological role, fluoride-specific ion channel. Important for reducing fluoride concentration in the cell, thus reducing its toxicity. This is Fluoride-specific ion channel FluC from Citrifermentans bemidjiense (strain ATCC BAA-1014 / DSM 16622 / JCM 12645 / Bem) (Geobacter bemidjiensis).